Consider the following 282-residue polypeptide: Deoxyribonuclease-1 (282 aa).

The first 22 residues, 1–22, serve as a signal peptide directing secretion; the sequence is MRGARLTGALLALAGLLQVALS. Residue asparagine 40 is glycosylated (N-linked (GlcNAc...) asparagine). The active site involves glutamate 100. An intrachain disulfide couples cysteine 123 to cysteine 126. Asparagine 128 carries N-linked (GlcNAc...) asparagine glycosylation. Histidine 156 is an active-site residue. Residues cysteine 195 and cysteine 231 are joined by a disulfide bond.

This sequence belongs to the DNase I family. The cofactor is Ca(2+). Mg(2+) serves as cofactor.

The protein localises to the secreted. It is found in the zymogen granule. Its subcellular location is the nucleus envelope. The enzyme catalyses Endonucleolytic cleavage to 5'-phosphodinucleotide and 5'-phosphooligonucleotide end-products.. Serum endocuclease secreted into body fluids by a wide variety of exocrine and endocrine organs. Expressed by non-hematopoietic tissues and preferentially cleaves protein-free DNA. Among other functions, seems to be involved in cell death by apoptosis. Binds specifically to G-actin and blocks actin polymerization. Together with DNASE1L3, plays a key role in degrading neutrophil extracellular traps (NETs). NETs are mainly composed of DNA fibers and are released by neutrophils to bind pathogens during inflammation. Degradation of intravascular NETs by DNASE1 and DNASE1L3 is required to prevent formation of clots that obstruct blood vessels and cause organ damage following inflammation. The chain is Deoxyribonuclease-1 (DNASE1) from Equus caballus (Horse).